Here is an 82-residue protein sequence, read N- to C-terminus: RNA-binding protein Hfq (82 aa).

The Sm domain maps to 10-70 (DAFLNQVRKD…ISTVAPLRPI (61 aa)).

It belongs to the Hfq family. Homohexamer.

Its function is as follows. RNA chaperone that binds small regulatory RNA (sRNAs) and mRNAs to facilitate mRNA translational regulation in response to envelope stress, environmental stress and changes in metabolite concentrations. Also binds with high specificity to tRNAs. The chain is RNA-binding protein Hfq from Syntrophomonas wolfei subsp. wolfei (strain DSM 2245B / Goettingen).